Consider the following 1391-residue polypeptide: Leucine-rich PPR motif-containing protein, mitochondrial (1391 aa).

The transit peptide at 1–42 directs the protein to the mitochondrion; the sequence is MSALLAGARFLLRPGLRALPAPCVRLSPGQGRYLNNTPGHFA. PPR repeat units lie at residues 110-144, 145-179, 180-214, 215-249, 250-284, 389-425, 704-738, 741-775, 779-813, 815-850, 948-982, 1028-1062, 1063-1093, 1100-1134, and 1310-1344; these read LLRS…GAVF, DVSH…NVQP, NRVT…DLPI, TEAV…GIEP, GPET…EGSL, NLHS…GMPV, AIGT…DSSA, DTSK…DVPL, TTTS…GLAK, TSNL…NCMP, RDDM…NVIP, PESS…GTAM, SASA…AENH, NDAA…DKVP, and RETA…SVSP. Residues 1118–1387 form an RNA-binding region; that stretch reads KDALASLKAM…KLKKDKADSY (270 aa).

Its subcellular location is the mitochondrion. The protein localises to the nucleus. Functionally, may play a role in RNA metabolism in both nuclei and mitochondria. May bind mature mRNA in the nucleus outer membrane. In mitochondria binds to poly(A) mRNA. May be involved in transcription regulation. Binds single-stranded DNA. This chain is Leucine-rich PPR motif-containing protein, mitochondrial (lrpprc), found in Xenopus tropicalis (Western clawed frog).